Here is a 323-residue protein sequence, read N- to C-terminus: Cyclin-H (323 aa).

Ser-5 bears the Phosphoserine; by CDK8 mark. Ser-132 carries the post-translational modification Phosphoserine. The tract at residues 299 to 323 (DDDYVPKKSKHEEEEWTDDDLVESL) is disordered. The span at 302–311 (YVPKKSKHEE) shows a compositional bias: basic and acidic residues. The segment covering 312 to 323 (EEWTDDDLVESL) has biased composition (acidic residues). The residue at position 315 (Thr-315) is a Phosphothreonine. Residue Ser-322 is modified to Phosphoserine.

The protein belongs to the cyclin family. Cyclin C subfamily. In terms of assembly, associates primarily with CDK7 and MAT1 to form the CAK complex. CAK can further associate with the core-TFIIH to form the TFIIH basal transcription factor.

It localises to the nucleus. In terms of biological role, regulates CDK7, the catalytic subunit of the CDK-activating kinase (CAK) enzymatic complex. CAK activates the cyclin-associated kinases CDK1, CDK2, CDK4 and CDK6 by threonine phosphorylation. CAK complexed to the core-TFIIH basal transcription factor activates RNA polymerase II by serine phosphorylation of the repetitive C-terminal domain (CTD) of its large subunit (POLR2A), allowing its escape from the promoter and elongation of the transcripts. Involved in cell cycle control and in RNA transcription by RNA polymerase II. Its expression and activity are constant throughout the cell cycle. This chain is Cyclin-H (CCNH), found in Macaca fascicularis (Crab-eating macaque).